Consider the following 130-residue polypeptide: Fluoride-specific ion channel FluC (130 aa).

A run of 4 helical transmembrane segments spans residues Gly2–Leu22, Gly36–Ile56, Phe71–Ile91, and Ile100–Leu120. Gly79 and Thr82 together coordinate Na(+).

Belongs to the fluoride channel Fluc/FEX (TC 1.A.43) family.

It localises to the cell inner membrane. The catalysed reaction is fluoride(in) = fluoride(out). Na(+) is not transported, but it plays an essential structural role and its presence is essential for fluoride channel function. Functionally, fluoride-specific ion channel. Important for reducing fluoride concentration in the cell, thus reducing its toxicity. The sequence is that of Fluoride-specific ion channel FluC from Francisella tularensis subsp. tularensis (strain FSC 198).